The chain runs to 277 residues: Glutamate racemase (277 aa).

Substrate contacts are provided by residues 25–26 and 57–58; these read DS and YG. The active-site Proton donor/acceptor is Cys-89. Position 90 to 91 (90 to 91) interacts with substrate; the sequence is NT. Cys-204 serves as the catalytic Proton donor/acceptor. Substrate is bound at residue 205–206; it reads TH.

Belongs to the aspartate/glutamate racemases family.

The enzyme catalyses L-glutamate = D-glutamate. It functions in the pathway cell wall biogenesis; peptidoglycan biosynthesis. Functionally, provides the (R)-glutamate required for cell wall biosynthesis. The sequence is that of Glutamate racemase from Brucella ovis (strain ATCC 25840 / 63/290 / NCTC 10512).